The sequence spans 38 residues: Tyrosinase inhibitor (38 aa).

3 disulfide bridges follow: Cys-11–Cys-25, Cys-18–Cys-29, and Cys-24–Cys-36. Tyr-32 is modified (3',4'-dihydroxyphenylalanine).

In terms of assembly, monomer. Post-translationally, contains L-DOPA (3',4'-dihydroxyphenylalanine).

The protein resides in the secreted. Potent reversible, competitive inhibitor of tyrosinase (phenol oxidase) in the nanomolar range. The chain is Tyrosinase inhibitor from Musca domestica (House fly).